The chain runs to 223 residues: Cuticular glutathione peroxidase (223 aa).

The first 19 residues, methionine 1 to alanine 19, serve as a signal peptide directing secretion. N-linked (GlcNAc...) asparagine glycosylation is present at asparagine 39. Residue cysteine 74 is part of the active site. Asparagine 92 carries N-linked (GlcNAc...) asparagine glycosylation.

It belongs to the glutathione peroxidase family. As to quaternary structure, homotetramer.

The protein resides in the secreted. The enzyme catalyses 2 glutathione + H2O2 = glutathione disulfide + 2 H2O. In terms of biological role, could inhibit the oxidative burst of leukocytes and neutralize the secondary products of lipid peroxidation, thus providing the resistance of these parasites to immune effector mechanisms and their persistence in the mammalian host. It may also be involved in the formation of cross-linking residues such as dityrosine, trityrosine and isotrityrosine identified in cuticular collagen. Highly cross-linked external cortex may also serve to protect the parasite from immune attack. This is Cuticular glutathione peroxidase from Brugia malayi (Filarial nematode worm).